Here is a 516-residue protein sequence, read N- to C-terminus: Nucleolar complex protein 4 homolog (516 aa).

A run of 3 helical transmembrane segments spans residues 296–316 (SACD…FILI), 347–367 (FFHL…LVAA), and 375–395 (LALT…CNLL).

It belongs to the CBF/MAK21 family.

The protein localises to the nucleus membrane. The protein resides in the nucleus. It is found in the nucleolus. In Mus musculus (Mouse), this protein is Nucleolar complex protein 4 homolog (Noc4l).